The sequence spans 1298 residues: Phosphoribosylformylglycinamidine synthase (1298 aa).

Residues 298 to 328 (TAIAPFPGASTGSGGEIRDEGATGRGAKPKA) form a disordered region. Residues 305–316 (GASTGSGGEIRD), 384–386 (TGY), and alanine 676 each bind ATP. Mg(2+) is bound by residues aspartate 677, glutamate 716, asparagine 720, and aspartate 884. Serine 886 serves as a coordination point for ATP. The Glutamine amidotransferase type-1 domain occupies 1045-1298 (VAILREQGVN…MFRNARVWVD (254 aa)). Cysteine 1138 acts as the Nucleophile in catalysis. Residues histidine 1263 and glutamate 1265 contribute to the active site.

The protein in the N-terminal section; belongs to the FGAMS family. As to quaternary structure, monomer.

Its subcellular location is the cytoplasm. It carries out the reaction N(2)-formyl-N(1)-(5-phospho-beta-D-ribosyl)glycinamide + L-glutamine + ATP + H2O = 2-formamido-N(1)-(5-O-phospho-beta-D-ribosyl)acetamidine + L-glutamate + ADP + phosphate + H(+). It functions in the pathway purine metabolism; IMP biosynthesis via de novo pathway; 5-amino-1-(5-phospho-D-ribosyl)imidazole from N(2)-formyl-N(1)-(5-phospho-D-ribosyl)glycinamide: step 1/2. Functionally, phosphoribosylformylglycinamidine synthase involved in the purines biosynthetic pathway. Catalyzes the ATP-dependent conversion of formylglycinamide ribonucleotide (FGAR) and glutamine to yield formylglycinamidine ribonucleotide (FGAM) and glutamate. This Pseudomonas aeruginosa (strain ATCC 15692 / DSM 22644 / CIP 104116 / JCM 14847 / LMG 12228 / 1C / PRS 101 / PAO1) protein is Phosphoribosylformylglycinamidine synthase.